The primary structure comprises 461 residues: Probable tubulin polyglutamylase TTLL9 (461 aa).

Residues 1–10 (MSRQKNQNSK) show a composition bias toward polar residues. Residues 1-20 (MSRQKNQNSKGHGVSKGKER) form a disordered region. One can recognise a TTL domain in the interval 22-402 (QRTLIRFKTT…EARLTGKEKR (381 aa)). ATP is bound by residues Lys149 and 155–156 (QG). Residue Gln155 coordinates a protein. Positions 172 to 208 (RKGTSGKKPTGVETQPARANMNPSGSHDTRSSDDQKD) are disordered. The span at 198–208 (HDTRSSDDQKD) shows a compositional bias: basic and acidic residues. ATP contacts are provided by residues 218–221 (QRYV) and 231–233 (KFD). Residue Arg257 participates in L-glutamate binding. 276 to 277 (TN) provides a ligand contact to ATP. L-glutamate is bound at residue Lys294. Mg(2+) contacts are provided by Asp348, Glu361, and Asn363. Position 379 (Lys379) interacts with L-glutamate.

Belongs to the tubulin--tyrosine ligase family. It depends on Mg(2+) as a cofactor. As to expression, highly expressed in brain and testis. Expressed in heart, kidney and lung. In the brain, expressed in ependymal cilia, cortex, corpus callosum and striatum. In the testis, specifically expressed in the seminiferous tubules.

The protein resides in the cytoplasm. It is found in the cytoskeleton. Its subcellular location is the cilium basal body. It localises to the flagellum axoneme. It catalyses the reaction (L-glutamyl)(n)-gamma-L-glutamyl-L-glutamyl-[protein] + L-glutamate + ATP = (L-glutamyl)(n+1)-gamma-L-glutamyl-L-glutamyl-[protein] + ADP + phosphate + H(+). Probable tubulin polyglutamylase that generates side chains of glutamate on the gamma-carboxyl group of specific glutamate residues within the C-terminal tail of target proteins. Similar to TTLL1, may acquire enzymatic activity only in complex with other proteins as it is most likely lacking domains important for autonomous activity. Mediates tubulin polyglutamylation which induces establishment of microtubule heterogeneity in sperm flagella, thereby playing a role in normal motile flagella axoneme structure and sperm flagella beating pattern. The sequence is that of Probable tubulin polyglutamylase TTLL9 from Mus musculus (Mouse).